The sequence spans 262 residues: Indole-3-glycerol phosphate synthase (262 aa).

Belongs to the TrpC family.

It carries out the reaction 1-(2-carboxyphenylamino)-1-deoxy-D-ribulose 5-phosphate + H(+) = (1S,2R)-1-C-(indol-3-yl)glycerol 3-phosphate + CO2 + H2O. It participates in amino-acid biosynthesis; L-tryptophan biosynthesis; L-tryptophan from chorismate: step 4/5. This is Indole-3-glycerol phosphate synthase from Dechloromonas aromatica (strain RCB).